Here is a 123-residue protein sequence, read N- to C-terminus: MTKLIVLSRVSMNEPTKETSFEYVLSDKKSLKNKINKLKKRVFDENIEEFNEINEIDGVNSICPYINRDTYYDPDFKKYTKIVKNFSLMDDTFLIEQHTSYSFAYSISVVDLVKDNTLVLYEH.

This is an uncharacterized protein from Acanthamoeba polyphaga mimivirus (APMV).